A 41-amino-acid polypeptide reads, in one-letter code: Photosystem I reaction center subunit IX (41 aa).

The chain crosses the membrane as a helical span at residues 7–27 (YLSTAPVLLTLWMTFTAGFII).

This sequence belongs to the PsaJ family.

The protein resides in the plastid. It localises to the chloroplast thylakoid membrane. May help in the organization of the PsaE and PsaF subunits. The sequence is that of Photosystem I reaction center subunit IX from Trieres chinensis (Marine centric diatom).